Consider the following 336-residue polypeptide: GTPase Obg (336 aa).

The region spanning Met1–Ile159 is the Obg domain. In terms of domain architecture, OBG-type G spans Ala160–Asp327. Residues Gly166–Ser173, Phe191–His195, Asp212–Gly215, Ser279–Asp282, and Ser308–Val310 each bind GTP. Positions 173 and 193 each coordinate Mg(2+).

This sequence belongs to the TRAFAC class OBG-HflX-like GTPase superfamily. OBG GTPase family. As to quaternary structure, monomer. Requires Mg(2+) as cofactor.

It is found in the cytoplasm. In terms of biological role, an essential GTPase which binds GTP, GDP and possibly (p)ppGpp with moderate affinity, with high nucleotide exchange rates and a fairly low GTP hydrolysis rate. Plays a role in control of the cell cycle, stress response, ribosome biogenesis and in those bacteria that undergo differentiation, in morphogenesis control. The chain is GTPase Obg from Sinorhizobium medicae (strain WSM419) (Ensifer medicae).